A 505-amino-acid polypeptide reads, in one-letter code: Flagellin (505 aa).

This sequence belongs to the bacterial flagellin family.

It localises to the secreted. The protein resides in the bacterial flagellum. Flagellin is the subunit protein which polymerizes to form the filaments of bacterial flagella. This Salmonella muenchen protein is Flagellin (fliC).